The following is a 330-amino-acid chain: Endochitinase Ziz m 1.0101 (330 aa).

The first 24 residues, 1-24 (MVPQAKLVVASLILTSALIQTSEA), serve as a signal peptide directing secretion. In terms of domain architecture, GH18 spans 26-330 (GGIATYWGQY…LRTKFMYQNA (305 aa)). Cystine bridges form between Cys47-Cys90, Cys77-Cys80, and Cys187-Cys219. The segment at 72–86 (NISGHCSDCTFLGEE) is binds to IgE in 70% of the 10 patients tested allergic to Indian jujube and latex. The binds to IgE in 100% of the 10 patients tested allergic to Indian jujube and latex; sufficient for prediction of the presence of allergic reactions in these patients stretch occupies residues 292 to 301 (VWNRYYDLKT). Binds to IgE in 70% of the 10 patients tested allergic to Indian jujube and latex stretches follow at residues 300-311 (KTNYSSSIILEY) and 309-320 (LEYVNSGTKYLP).

This sequence belongs to the glycosyl hydrolase 18 family. Chitinase class II subfamily.

The protein localises to the secreted. The catalysed reaction is Random endo-hydrolysis of N-acetyl-beta-D-glucosaminide (1-&gt;4)-beta-linkages in chitin and chitodextrins.. Defense against chitin containing fungal pathogens. In Ziziphus mauritiana (Indian jujube), this protein is Endochitinase Ziz m 1.0101.